Consider the following 100-residue polypeptide: Elevenin (100 aa).

The signal sequence occupies residues 1-24; the sequence is MALSQKALLVLVLSMLLTASDSWA. A disulfide bridge links C29 with C38. Residues 44–100 constitute a propeptide that is removed on maturation; it reads KRGGDSLSVGGSAELDDTLTDPFLKSEEPKEWRELTRLSRVLQTFLSHPTGEMEQHD.

This sequence belongs to the elevenin family. As to quaternary structure, monomer. As to expression, expressed by the venom duct.

It is found in the secreted. In terms of biological role, may mimic the function of prey elevenin neuropeptide. In vivo, intracranial injection in mice induces hyperactivity. The protein is Elevenin of Conus ammiralis (Admiral cone).